Reading from the N-terminus, the 110-residue chain is Vacuolar ATPase assembly integral membrane protein VMA21 (110 aa).

A disordered region spans residues 1–28 (MTTRRIIGQDGEEKTYLDVDPRGPPGPS). Residues 1-44 (MTTRRIIGQDGEEKTYLDVDPRGPPGPSNISPAVPASVIWKLMS) lie on the Cytoplasmic side of the membrane. Basic and acidic residues predominate over residues 11–21 (GEEKTYLDVDP). The helical transmembrane segment at 45–65 (FTFAMITLPIGTYFFTVNYVF) threads the bilayer. Residues 66 to 71 (GGNATY) lie on the Lumenal side of the membrane. The chain crosses the membrane as a helical span at residues 72-92 (AGALAAIMANVVLIAYVIMAF). Over 93–110 (KDDQAEQAEDAREAKKEL) the chain is Cytoplasmic. Positions 107-110 (KKEL) match the Prevents secretion from ER motif.

The protein belongs to the VMA21 family.

It localises to the endoplasmic reticulum membrane. The protein localises to the endoplasmic reticulum-Golgi intermediate compartment membrane. Its subcellular location is the cytoplasmic vesicle. The protein resides in the COPII-coated vesicle membrane. Functionally, required for the assembly of the V0 complex of the vacuolar ATPase (V-ATPase) in the endoplasmic reticulum. This chain is Vacuolar ATPase assembly integral membrane protein VMA21, found in Phaeosphaeria nodorum (strain SN15 / ATCC MYA-4574 / FGSC 10173) (Glume blotch fungus).